The following is a 489-amino-acid chain: Hyaluronoglucuronidase (489 aa).

Glutamate 176 functions as the Proton donor in the catalytic mechanism. Glutamate 290 acts as the Nucleophile in catalysis.

Belongs to the glycosyl hydrolase 79 family.

It carries out the reaction Random hydrolysis of (1-&gt;3)-linkages between beta-D-glucuronate and N-acetyl-D-glucosamine residues in hyaluronate.. Hyaluronidase activity is inhibited by Mn(2+), Cu(2+) and Fe(3+). Functionally, hyaluronidase that mediates hydrolysis of (1-&gt;3)-linkages between beta-D-glucuronate and N-acetyl-D-glucosamine residues in hyaluronate. Very specific to hyaluronate: not able to hydrolyze chitin, heparin or chondroitin sulfate. This is Hyaluronoglucuronidase from Hirudo nipponia (Korean blood-sucking leech).